A 367-amino-acid polypeptide reads, in one-letter code: 3-methyl-2-oxobutanoate dehydrogenase subunit alpha (367 aa).

Thiamine diphosphate contacts are provided by residues 99–101 (QYR), 141–142 (PI), 170–176 (GDGATSE), 200–204 (NQWAI), and H269. Y100 lines the substrate pocket. Residues D171 and N200 each contribute to the Mg(2+) site.

Heteromer of E1 alpha (BkdA) and beta (BkdB) subunits. Part of the BCKADH complex, consisting of multiple copies of BkdA/BkdB (E1), BkdC (E2) and Lpd (E3). Mg(2+) serves as cofactor. It depends on thiamine diphosphate as a cofactor.

The enzyme catalyses N(6)-[(R)-lipoyl]-L-lysyl-[protein] + 3-methyl-2-oxobutanoate + H(+) = N(6)-[(R)-S(8)-2-methylpropanoyldihydrolipoyl]-L-lysyl-[protein] + CO2. Component of the branched-chain alpha-ketoacid dehydrogenase (BCKADH) complex, that catalyzes the overall conversion of branched-chain alpha-ketoacids to acyl-CoA and CO(2). The polypeptide is 3-methyl-2-oxobutanoate dehydrogenase subunit alpha (bkdA) (Mycobacterium tuberculosis (strain CDC 1551 / Oshkosh)).